Reading from the N-terminus, the 163-residue chain is MEFHFDATFFAFVGLVLFLALVVYLKVPGMMARSLDDRADQIRNELAEAKRLREEAQHLLAEYQRKRKEAEAEAAHIVAAAEREAQMLTAEAKKKTEEFVANRTALSEQKIKQAEVEAMKAVRSAAVDLAIAAAETVLGKQADAKVQSELFGNAVGQVKTRLN.

A helical membrane pass occupies residues 5–25 (FDATFFAFVGLVLFLALVVYL).

It belongs to the ATPase B chain family. In terms of assembly, F-type ATPases have 2 components, F(1) - the catalytic core - and F(0) - the membrane proton channel. F(1) has five subunits: alpha(3), beta(3), gamma(1), delta(1), epsilon(1). F(0) has three main subunits: a(1), b(2) and c(10-14). The alpha and beta chains form an alternating ring which encloses part of the gamma chain. F(1) is attached to F(0) by a central stalk formed by the gamma and epsilon chains, while a peripheral stalk is formed by the delta and b chains.

The protein resides in the cell inner membrane. Functionally, f(1)F(0) ATP synthase produces ATP from ADP in the presence of a proton or sodium gradient. F-type ATPases consist of two structural domains, F(1) containing the extramembraneous catalytic core and F(0) containing the membrane proton channel, linked together by a central stalk and a peripheral stalk. During catalysis, ATP synthesis in the catalytic domain of F(1) is coupled via a rotary mechanism of the central stalk subunits to proton translocation. Its function is as follows. Component of the F(0) channel, it forms part of the peripheral stalk, linking F(1) to F(0). The protein is ATP synthase subunit b 1 of Rhizobium leguminosarum bv. trifolii (strain WSM2304).